We begin with the raw amino-acid sequence, 373 residues long: Glutamate 5-kinase 2 (373 aa).

An ATP-binding site is contributed by lysine 11. Residues serine 51, aspartate 138, and asparagine 150 each coordinate substrate. ATP is bound by residues 170–171 (SD) and 212–218 (TGGMKSK). Positions 279 to 355 (EGDIVVHNES…TNQETAASSQ (77 aa)) constitute a PUA domain.

The protein belongs to the glutamate 5-kinase family.

The protein resides in the cytoplasm. It carries out the reaction L-glutamate + ATP = L-glutamyl 5-phosphate + ADP. Its pathway is amino-acid biosynthesis; L-proline biosynthesis; L-glutamate 5-semialdehyde from L-glutamate: step 1/2. Catalyzes the transfer of a phosphate group to glutamate to form L-glutamate 5-phosphate. The polypeptide is Glutamate 5-kinase 2 (Bacillus licheniformis (strain ATCC 14580 / DSM 13 / JCM 2505 / CCUG 7422 / NBRC 12200 / NCIMB 9375 / NCTC 10341 / NRRL NRS-1264 / Gibson 46)).